A 423-amino-acid polypeptide reads, in one-letter code: MTLIAFGINHKTAPVELREKVAFSPDAMVEALKSLAHLTGADESVIVSTCNRTEIYAQAENLTADALTTWLAEFHQAKADELGLNSYIYHQEDAIKHIMRVACGLDSLILGEPQILGQVKQAFVSAKDSGVIKSDFERLFQQTFSVAKRVRSETEIGSNAVSVAYASVQLAKHIFSSLKKSNVLLIGAGETIELVAKHMHEQGVKKLSVANRTLARAEAIAQPLGATTLTLTQIPAHLKDADIVISSTASQLPILGKGLVERALKDRRHKPMFLVDLAVPRDIEAEVGELDDAYLYTVDDLQQIVEKNIESRQHAALQAQQMIEEQAQQYMLWRQGQSSIDVLRDFRQQSESQRDTLIAKALNQLADGKEAEQVIKELANKLTNSLIHAPTKALKKAAMQQDNKNMSLLQDALGLARANDSSK.

Substrate is bound by residues 49-52, S107, 112-114, and Q118; these read TCNR and EPQ. The active-site Nucleophile is C50. 187–192 provides a ligand contact to NADP(+); sequence GAGETI.

It belongs to the glutamyl-tRNA reductase family. Homodimer.

It catalyses the reaction (S)-4-amino-5-oxopentanoate + tRNA(Glu) + NADP(+) = L-glutamyl-tRNA(Glu) + NADPH + H(+). Its pathway is porphyrin-containing compound metabolism; protoporphyrin-IX biosynthesis; 5-aminolevulinate from L-glutamyl-tRNA(Glu): step 1/2. Functionally, catalyzes the NADPH-dependent reduction of glutamyl-tRNA(Glu) to glutamate 1-semialdehyde (GSA). This Pseudoalteromonas atlantica (strain T6c / ATCC BAA-1087) protein is Glutamyl-tRNA reductase.